Reading from the N-terminus, the 222-residue chain is Glutathione S-transferase A2 (222 aa).

The residue at position 2 (A2) is an N-acetylalanine. The region spanning 3 to 83 (GKPVLHYFNA…YIATKYDLYG (81 aa)) is the GST N-terminal domain. K4 carries the N6-succinyllysine modification. Glutathione is bound by residues Y9, K45, 54-55 (QV), and 67-68 (QT). Residues 85-208 (DMKERALIDM…HPGSQRKPPL (124 aa)) enclose the GST C-terminal domain.

It belongs to the GST superfamily. Alpha family. As to quaternary structure, homodimer. Heterodimer of GSTA1 and GSTA2. Expressed in the kidney.

The catalysed reaction is RX + glutathione = an S-substituted glutathione + a halide anion + H(+). Catalyzes the conjugation of glutathione to a large variety of electrophilic compounds. This chain is Glutathione S-transferase A2 (Gsta2), found in Mus musculus (Mouse).